A 428-amino-acid polypeptide reads, in one-letter code: MRVVILGSGVVGVASAYYLARAGHEVTVIDREAGPALDTSFANAGQISPGYAAPWAAPGVPLKAVKWMFEKHAPLAIRLDGTRFQLQWMWQMLRNCTTERYALNKGRMVRLAEYSRDCLQALRAETAIQYEGRTGGTLQVFRTQQQLDGAAKDIAVLREANVPFELLSSDELKKAEPALAAVSHKLTGGLRLPGDETGDCQLFTTRLAALAEQLGVKFRFNTRIDALAVAGGKIAGVQCGGEMVRADAYVVALGSYSTNLVASLVKIPVYPLKGYSITAPIVDAAKAPVSTVLDETYKIAITRFDDRIRVGGMAEIVGFDKRLRDARRGTLEMCVNDLFPGGGDTEKATFWTGLRPMTPDGTPIVGRTPVPNLFLNTGHGTLGWTMSCGSGQLLADLMSGKKPAIRADDLSVHRYLSETDGEHRPAYA.

3-17 (VVILGSGVVGVASAY) is a binding site for FAD.

The protein belongs to the DadA oxidoreductase family. FAD serves as cofactor.

The enzyme catalyses a D-alpha-amino acid + A + H2O = a 2-oxocarboxylate + AH2 + NH4(+). It participates in amino-acid degradation; D-alanine degradation; NH(3) and pyruvate from D-alanine: step 1/1. Functionally, oxidative deamination of D-amino acids. The protein is D-amino acid dehydrogenase of Burkholderia pseudomallei (strain K96243).